Here is a 447-residue protein sequence, read N- to C-terminus: UPF0210 protein LBUL_0934 (447 aa).

This sequence belongs to the UPF0210 family. As to quaternary structure, homodimer.

The sequence is that of UPF0210 protein LBUL_0934 from Lactobacillus delbrueckii subsp. bulgaricus (strain ATCC BAA-365 / Lb-18).